We begin with the raw amino-acid sequence, 240 residues long: MTSLPCPLPGRDASKAVFPDLAPVPSVAAAYPLGLSPTTAASPNLSYSRPYGHLLSYPYTEPANPGDSYLSCQQPAALSQPLCGPAEHPQELEADSEKPRLSPEPSERRPQAPAKKLRKPRTIYSSLQLQHLNQRFQHTQYLALPERAQLAAQLGLTQTQVKIWFQNKRSKYKKLLKQNSGGQEGDFPGRTFSVSPCSPPLPSLWDLPKAGTLPTSGYGNSFGAWYQHHSSDVLASPQMM.

Residues 80–120 (QPLCGPAEHPQELEADSEKPRLSPEPSERRPQAPAKKLRKP) form a disordered region. The span at 88–110 (HPQELEADSEKPRLSPEPSERRP) shows a compositional bias: basic and acidic residues. A DNA-binding region (homeobox) is located at residues 117–176 (LRKPRTIYSSLQLQHLNQRFQHTQYLALPERAQLAAQLGLTQTQVKIWFQNKRSKYKKLL).

The protein belongs to the distal-less homeobox family. In terms of tissue distribution, expressed in leukemia cells and placenta. Also expressed in kidney and fetal liver.

The protein resides in the nucleus. May play a role in determining the production of hemoglobin S. May act as a repressor. During embryonic development, plays a role in palatogenesis. This chain is Homeobox protein DLX-4 (DLX4), found in Homo sapiens (Human).